Reading from the N-terminus, the 610-residue chain is UvrABC system protein C (610 aa).

Residues 16–94 (SQPGVYRMYD…IKLYQPRYNV (79 aa)) enclose the GIY-YIG domain. The 36-residue stretch at 204-239 (DQVLTQLIARMEKASQDLAFEEAARIRDQIQAVRRV) folds into the UVR domain.

This sequence belongs to the UvrC family. In terms of assembly, interacts with UvrB in an incision complex.

It is found in the cytoplasm. Functionally, the UvrABC repair system catalyzes the recognition and processing of DNA lesions. UvrC both incises the 5' and 3' sides of the lesion. The N-terminal half is responsible for the 3' incision and the C-terminal half is responsible for the 5' incision. The chain is UvrABC system protein C from Salmonella typhi.